The sequence spans 176 residues: Large ribosomal subunit protein uL16 (176 aa).

This sequence belongs to the universal ribosomal protein uL16 family.

In Halobacterium salinarum (strain ATCC 29341 / DSM 671 / R1), this protein is Large ribosomal subunit protein uL16.